The following is a 171-amino-acid chain: 3-hydroxydecanoyl-[acyl-carrier-protein] dehydratase (171 aa).

Residue histidine 70 is part of the active site.

Belongs to the thioester dehydratase family. FabA subfamily. In terms of assembly, homodimer.

The protein localises to the cytoplasm. The enzyme catalyses a (3R)-hydroxyacyl-[ACP] = a (2E)-enoyl-[ACP] + H2O. The catalysed reaction is (3R)-hydroxydecanoyl-[ACP] = (2E)-decenoyl-[ACP] + H2O. It catalyses the reaction (2E)-decenoyl-[ACP] = (3Z)-decenoyl-[ACP]. Its pathway is lipid metabolism; fatty acid biosynthesis. Necessary for the introduction of cis unsaturation into fatty acids. Catalyzes the dehydration of (3R)-3-hydroxydecanoyl-ACP to E-(2)-decenoyl-ACP and then its isomerization to Z-(3)-decenoyl-ACP. Can catalyze the dehydratase reaction for beta-hydroxyacyl-ACPs with saturated chain lengths up to 16:0, being most active on intermediate chain length. The polypeptide is 3-hydroxydecanoyl-[acyl-carrier-protein] dehydratase (Pseudomonas syringae pv. tomato (strain ATCC BAA-871 / DC3000)).